The following is a 118-amino-acid chain: NLIQFSNMIQCANKGSRPSLHYADYGCYCGWGGSGTPVDELDRCCKVHDDCYDQAGKKGCFPKLTLYSWDCTGNVPICNPKSKCKDFVCACDAAAAKCFAKAPYNKANWNIDTKTRCK.

7 cysteine pairs are disulfide-bonded: Cys11–Cys71, Cys27–Cys117, Cys29–Cys45, Cys44–Cys98, Cys51–Cys91, Cys60–Cys84, and Cys78–Cys89. 3 residues coordinate Ca(2+): Tyr28, Gly30, and Gly32. His48 is an active-site residue. Asp49 contributes to the Ca(2+) binding site. Asp92 is an active-site residue.

It belongs to the phospholipase A2 family. Group I subfamily. D49 sub-subfamily. Ca(2+) is required as a cofactor. Expressed by the venom gland.

The protein resides in the secreted. The catalysed reaction is a 1,2-diacyl-sn-glycero-3-phosphocholine + H2O = a 1-acyl-sn-glycero-3-phosphocholine + a fatty acid + H(+). Functionally, PLA2 catalyzes the calcium-dependent hydrolysis of the 2-acyl groups in 3-sn-phosphoglycerides. The sequence is that of Basic phospholipase A2 PA-10A from Pseudechis australis (Mulga snake).